The following is a 264-amino-acid chain: NADH dehydrogenase [ubiquinone] iron-sulfur protein 3, mitochondrial (264 aa).

The N-terminal 36 residues, 1–36 (MAAAAVARLWWRGILGASALTRGTGRPSVLLLPVRR), are a transit peptide targeting the mitochondrion.

It belongs to the complex I 30 kDa subunit family. Core subunit of respiratory chain NADH dehydrogenase (Complex I) which is composed of 45 different subunits. Interacts with NDUFAF3. Interacts with RAB5IF. Found in subcomplexes containing subunits NDUFS2, MT-ND1 and NDUFA13.

The protein localises to the mitochondrion inner membrane. The catalysed reaction is a ubiquinone + NADH + 5 H(+)(in) = a ubiquinol + NAD(+) + 4 H(+)(out). Functionally, core subunit of the mitochondrial membrane respiratory chain NADH dehydrogenase (Complex I) which catalyzes electron transfer from NADH through the respiratory chain, using ubiquinone as an electron acceptor. Essential for the catalytic activity and assembly of complex I. The protein is NADH dehydrogenase [ubiquinone] iron-sulfur protein 3, mitochondrial (NDUFS3) of Homo sapiens (Human).